Reading from the N-terminus, the 480-residue chain is Aspartyl/glutamyl-tRNA(Asn/Gln) amidotransferase subunit B (480 aa).

This sequence belongs to the GatB/GatE family. GatB subfamily. Heterotrimer of A, B and C subunits.

The catalysed reaction is L-glutamyl-tRNA(Gln) + L-glutamine + ATP + H2O = L-glutaminyl-tRNA(Gln) + L-glutamate + ADP + phosphate + H(+). The enzyme catalyses L-aspartyl-tRNA(Asn) + L-glutamine + ATP + H2O = L-asparaginyl-tRNA(Asn) + L-glutamate + ADP + phosphate + 2 H(+). Functionally, allows the formation of correctly charged Asn-tRNA(Asn) or Gln-tRNA(Gln) through the transamidation of misacylated Asp-tRNA(Asn) or Glu-tRNA(Gln) in organisms which lack either or both of asparaginyl-tRNA or glutaminyl-tRNA synthetases. The reaction takes place in the presence of glutamine and ATP through an activated phospho-Asp-tRNA(Asn) or phospho-Glu-tRNA(Gln). This is Aspartyl/glutamyl-tRNA(Asn/Gln) amidotransferase subunit B from Streptococcus agalactiae serotype Ia (strain ATCC 27591 / A909 / CDC SS700).